The chain runs to 222 residues: Protein ORM1 (222 aa).

A disordered region spans residues 1–57 (MTELDYQGTAEAASTSYSRNQTDLKPFPSAGSASSSIKTTEPVKDHRRRRSSSIISH). Residues 1 to 85 (MTELDYQGTA…NATWVDQRGA (85 aa)) lie on the Cytoplasmic side of the membrane. The span at 12–23 (AASTSYSRNQTD) shows a compositional bias: polar residues. 3 positions are modified to phosphoserine: S29, S32, and S56. The helical transmembrane segment at 86 to 106 (WIIHVVIIILLKLFYNLFPGV) threads the bilayer. Over 107–109 (TTE) the chain is Extracellular. The helical transmembrane segment at 110 to 130 (WSWTLTNMTYVIGSYVMFHLI) threads the bilayer. Residues 131–162 (KGTPFDFNGGAYDNLTMWEQIDDETLYTPSRK) lie on the Cytoplasmic side of the membrane. The helical transmembrane segment at 163–183 (FLISVPIALFLVSTHYAHYDL) threads the bilayer. Residue K184 is a topological domain, extracellular. A helical membrane pass occupies residues 185–205 (LFSWNCFLTTFGAVVPKLPVT). At 206 to 222 (HRLRISIPGITGRAQIS) the chain is on the cytoplasmic side.

The protein belongs to the ORM family. As to quaternary structure, component of the SPOTS complex, at least composed of LCB1/2 (LCB1 and/or LCB2), ORM1/2 (ORM1 and/or ORM2), SAC1 and TSC3. In terms of processing, phosphorylated in case of disruption of sphingolipid synthesis. Phosphorylation regulates inhibitory activity of serine palmitoyltransferases (LCB1 and LCB2).

It localises to the endoplasmic reticulum membrane. Component of the SPOTS complex that acts as a negative regulator of sphingolipid synthesis. Acts by inhibiting serine palmitoyltransferases (LCB1 and LCB2) activity. Along with ORM2, plays a role in the phosphorylation of LAC1 and YPK1, the distribution of actin patches between mother and daughter cells, and in endocytosis. Disruption or inhibition of sphingolipid synthesis leads to the activation and phosphorylation of YPK1 through the TORC2 and PKH1 pathways, which in turn phosphorylates ORM1 and LAG1 to activate sphingolipid synthesis. The polypeptide is Protein ORM1 (ORM1) (Saccharomyces cerevisiae (strain ATCC 204508 / S288c) (Baker's yeast)).